A 167-amino-acid chain; its full sequence is Regulatory protein RecX (167 aa).

The tract at residues 19–49 is disordered; it reads ESELRRKLASQPFSAKGHWGKQTGRSDNEPV.

The protein belongs to the RecX family.

It localises to the cytoplasm. Its function is as follows. Modulates RecA activity. The protein is Regulatory protein RecX of Yersinia enterocolitica serotype O:8 / biotype 1B (strain NCTC 13174 / 8081).